A 397-amino-acid polypeptide reads, in one-letter code: Teichoic acid D-alanine hydrolase (397 aa).

Positions 1–27 are cleaved as a signal peptide; that stretch reads MKFNKEKLVIHACVLLFIIISIGLVFH.

The protein resides in the cell membrane. It catalyses the reaction [(4-D-Ala)-(2-GlcNAc)-Rib-ol-P]n-[Gro-P]m-beta-D-ManNAc-(1-&gt;4)-alpha-D-GlcNAc-P-peptidoglycan + n H2O = [(2-GlcNAc)-Rib-ol-P]n-[Gro-P]m-beta-D-ManNAc-(1-&gt;4)-alpha-D-GlcNAc-P-peptidoglycan + n D-alanine.. Functionally, catalyzes the liberation of D-alanyl moieties present on wall teichoic acid (WTA) and lipoteichoic acid (LTA). Affects the methicillin resistance level and autolysis in the presence of Triton X-100 as well as the cell wall structure. This is Teichoic acid D-alanine hydrolase (fmtA) from Staphylococcus aureus (strain MRSA252).